Here is a 219-residue protein sequence, read N- to C-terminus: HTH-type transcriptional regulator LutR (219 aa).

The region spanning 1–56 (MIKNGELKPGDKLDSVQALAESFQVSRSAVREALSALKAMGLVEMKQGEGTYLKEF) is the HTH gntR-type domain. A DNA-binding region (H-T-H motif) is located at residues 16–35 (VQALAESFQVSRSAVREALS).

Its function is as follows. Negatively regulates the transcription of the lutABC operon, which is required for L-lactate utilization. LutR activity is regulated by lactate, since presence of L-lactate, that probably binds to LutR, leads to derepression of the operon. Also appears to be essential for bacilysin biosynthesis. In Bacillus subtilis (strain 168), this protein is HTH-type transcriptional regulator LutR (lutR).